The following is a 263-amino-acid chain: MQVWAIIYDKADFPDTLYQNALPFVDQAVQSKIKRFHRREDACRSLIGSLLPRVLLRKRGVSRDEMTFATTENGKPYCTTPDIDPPLGFNVTHDESVIAMAFGSGDLGPPAYNLGVDVMQLKVPPRITFSEFVDSVSSQESDQLTARERNIVLADIPEGEALRRFYWVWTLKEAYTKALGIGLGFDFRRIQYDVLEEKVTIDGELARGWQFRKFEVAHSGNKYVGVAARFVGGRNPSITDLDEGSLVCYDAASFVNRAIEELV.

It belongs to the P-Pant transferase superfamily.

The enzyme catalyses apo-[ACP] + CoA = holo-[ACP] + adenosine 3',5'-bisphosphate + H(+). In terms of biological role, transfers the 4'-phosphopantetheine moiety from coenzyme A to a Ser of an acyl-carrier-protein. Activates the peptidyl carrier protein (PCP) domains of surfactin synthas. The polypeptide is 4'-phosphopantetheinyl transferase pptA (pptA) (Paxillus involutus (Naked brimcap)).